A 950-amino-acid chain; its full sequence is F-box only protein 10 (950 aa).

An F-box domain is found at Met1–Leu48. PbH1 repeat units follow at residues Ser198–Gly217 and Val238–Gly260. The interval Ile313 to Glu364 is disordered. Residues Gly315–Cys324 show a composition bias toward polar residues. Residues Ser321 and Ser326 each carry the phosphoserine modification. The segment covering Gly330 to Arg342 has biased composition (basic and acidic residues). The segment covering Pro347 to Ser357 has biased composition (low complexity). PbH1 repeat units follow at residues Val423–Ser444, Asn467–Leu489, Glu490–Lys512, Lys513–Gly535, Asn536–Tyr558, His559–Glu581, Asn582–Arg604, Gly605–Asp627, Glu628–Ser650, Ser651–Ser673, Ile713–Ser735, Ser736–Gln758, Ser760–Phe782, Gln783–Gly805, and Arg828–Gly850.

Component of the SCF(FBXO10) complex consisting of CUL1, SKP1 and FBXO10. Interacts with BCL2. Interacts with PRDM1. As to expression, particularly highly expressed in B-cells.

It localises to the cytoplasm. It functions in the pathway protein modification; protein ubiquitination. Substrate-recognition component of the SCF (SKP1-CUL1-F-box protein)-type E3 ubiquitin ligase complex. Mediates the ubiquitination and degradation of BCL2, an antiapoptotic protein, thereby playing a role in apoptosis by controlling the stability of BCL2. Targets also the receptor for advanced glycation end products RAGE for ubiquitination and subsequent lysosomal degradation. Directly controls HGAL/GCSAM ubiquitination and degradation and thereby decreases BCR signaling. This Mus musculus (Mouse) protein is F-box only protein 10 (Fbxo10).